Here is a 490-residue protein sequence, read N- to C-terminus: Cruciferin BnC1 (490 aa).

An N-terminal signal peptide occupies residues 1–23 (MARLSSLLSFSLALLIFLHGSTA). Disulfide bonds link Cys-30–Cys-63 and Cys-106–Cys-307. Cupin type-1 domains follow at residues 35–263 (LNAL…RTAQ) and 313–462 (DNLD…EEAR). At Thr-109 the chain carries Phosphothreonine. Positions 113 to 164 (SSVFQPSGGSPSGEGQGQGQQGQGQGHQGQGQGQQGQQGQQGQQSQGQGFRD) are disordered. Positions 122 to 148 (SPSGEGQGQGQQGQGQGHQGQGQGQQG) are enriched in gly residues. A compositionally biased stretch (low complexity) spans 149 to 161 (QQGQQGQQSQGQG). Position 330 is a phosphotyrosine (Tyr-330). The residue at position 332 (Ser-332) is a Phosphoserine. Position 426 is a phosphothreonine (Thr-426).

This sequence belongs to the 11S seed storage protein (globulins) family. Hexamer; each subunit is composed of an acidic and a basic chain derived from a single precursor and linked by a disulfide bond.

This is a seed storage protein. This chain is Cruciferin BnC1 (BnC1), found in Brassica napus (Rape).